The chain runs to 397 residues: Citrate synthase (397 aa).

Residues histidine 266 and aspartate 320 contribute to the active site.

The protein belongs to the citrate synthase family.

The enzyme catalyses oxaloacetate + acetyl-CoA + H2O = citrate + CoA + H(+). It participates in carbohydrate metabolism; tricarboxylic acid cycle; isocitrate from oxaloacetate: step 1/2. This Synechocystis sp. (strain ATCC 27184 / PCC 6803 / Kazusa) protein is Citrate synthase (gltA).